A 207-amino-acid chain; its full sequence is Ribosomal RNA small subunit methyltransferase G (207 aa).

S-adenosyl-L-methionine contacts are provided by residues Gly73, Leu78, 124–125 (VE), and Arg139.

This sequence belongs to the methyltransferase superfamily. RNA methyltransferase RsmG family.

It localises to the cytoplasm. It carries out the reaction guanosine(527) in 16S rRNA + S-adenosyl-L-methionine = N(7)-methylguanosine(527) in 16S rRNA + S-adenosyl-L-homocysteine. Specifically methylates the N7 position of guanine in position 527 of 16S rRNA. This chain is Ribosomal RNA small subunit methyltransferase G, found in Enterobacter sp. (strain 638).